Here is a 302-residue protein sequence, read N- to C-terminus: Ribose-5-phosphate isomerase (302 aa).

The protein belongs to the ribose 5-phosphate isomerase family.

It localises to the cytoplasm. The enzyme catalyses aldehydo-D-ribose 5-phosphate = D-ribulose 5-phosphate. Its pathway is carbohydrate degradation; pentose phosphate pathway; D-ribose 5-phosphate from D-ribulose 5-phosphate (non-oxidative stage): step 1/1. The sequence is that of Ribose-5-phosphate isomerase (RKI1) from Cryptococcus neoformans var. neoformans serotype D (strain B-3501A) (Filobasidiella neoformans).